A 466-amino-acid chain; its full sequence is Ribulose bisphosphate carboxylase large chain (466 aa).

An N6,N6,N6-trimethyllysine modification is found at Lys5. Residues Asn114 and Thr164 each coordinate substrate. Catalysis depends on Lys166, which acts as the Proton acceptor. Lys168 serves as a coordination point for substrate. 3 residues coordinate Mg(2+): Lys192, Asp194, and Glu195. N6-carboxylysine is present on Lys192. The Proton acceptor role is filled by His285. 3 residues coordinate substrate: Arg286, His318, and Ser370.

It belongs to the RuBisCO large chain family. Type I subfamily. As to quaternary structure, heterohexadecamer of 8 large chains and 8 small chains; disulfide-linked. The disulfide link is formed within the large subunit homodimers. The cofactor is Mg(2+). Post-translationally, the disulfide bond which can form in the large chain dimeric partners within the hexadecamer appears to be associated with oxidative stress and protein turnover.

It is found in the plastid. The protein resides in the chloroplast. The catalysed reaction is 2 (2R)-3-phosphoglycerate + 2 H(+) = D-ribulose 1,5-bisphosphate + CO2 + H2O. The enzyme catalyses D-ribulose 1,5-bisphosphate + O2 = 2-phosphoglycolate + (2R)-3-phosphoglycerate + 2 H(+). In terms of biological role, ruBisCO catalyzes two reactions: the carboxylation of D-ribulose 1,5-bisphosphate, the primary event in carbon dioxide fixation, as well as the oxidative fragmentation of the pentose substrate in the photorespiration process. Both reactions occur simultaneously and in competition at the same active site. This chain is Ribulose bisphosphate carboxylase large chain, found in Drosera filiformis (Thread-leaved sundew).